The following is a 309-amino-acid chain: RING finger protein mug145 (309 aa).

The helical transmembrane segment at 23-43 (ILLFALVIILSVIFINFFFFY) threads the bilayer. An RING-type; atypical zinc finger spans residues 205-247 (CIICYADYAFDDILRVLPCEHVFHTQCIDTWMTTMKASCPLCN).

The protein resides in the membrane. Its function is as follows. Has a role in meiosis. This chain is RING finger protein mug145 (mug145), found in Schizosaccharomyces pombe (strain 972 / ATCC 24843) (Fission yeast).